A 283-amino-acid chain; its full sequence is Apidaecins type 73 (283 aa).

The first 18 residues, 1–18, serve as a signal peptide directing secretion; sequence KNFALAILVVTFVVAVFG. 9 consecutive propeptides follow at residues 19 to 41, 62 to 69, 90 to 97, 118 to 125, 146 to 153, 174 to 181, 202 to 209, 230 to 237, and 258 to 265; these read NTNLDPPTRPTRLRREAKPEAEP, EAEPEAEP, EAELEAEP, and EAKPEAKP. Residues 19–283 form a disordered region; the sequence is NTNLDPPTRP…PQPRPPHPRI (265 aa). Residues 273 to 283 show a composition bias toward pro residues; it reads IPQPRPPHPRI.

Belongs to the apidaecin family.

The protein localises to the secreted. Functionally, apidaecins have bactericidal activity; predominantly against Gram-negative bacteria. They seem to interfere with cell propagation. This Apis mellifera (Honeybee) protein is Apidaecins type 73 (APID73).